A 56-amino-acid chain; its full sequence is Large ribosomal subunit protein bL32c (56 aa).

Belongs to the bacterial ribosomal protein bL32 family.

The protein localises to the plastid. Its subcellular location is the chloroplast. The chain is Large ribosomal subunit protein bL32c from Huperzia lucidula (Shining clubmoss).